Consider the following 937-residue polypeptide: Protocadherin alpha-7 (937 aa).

The first 29 residues, methionine 1–glycine 29, serve as a signal peptide directing secretion. 6 Cadherin domains span residues glutamine 30–phenylalanine 133, proline 134–phenylalanine 242, aspartate 243–leucine 350, threonine 351–phenylalanine 455, alanine 456–leucine 565, and valine 581–alanine 678. The Extracellular portion of the chain corresponds to glutamine 30 to asparagine 697. A disulfide bridge connects residues cysteine 96 and cysteine 102. Asparagine 254 and asparagine 265 each carry an N-linked (GlcNAc...) asparagine glycan. N-linked (GlcNAc...) asparagine glycosylation occurs at asparagine 548. Residues valine 698–tyrosine 718 form a helical membrane-spanning segment. Residues threonine 719–glutamine 937 lie on the Cytoplasmic side of the membrane. Disordered stretches follow at residues glutamine 756 to tyrosine 795 and alanine 817 to proline 843. 5 PXXP repeats span residues proline 774–proline 777, proline 786–proline 789, proline 819–proline 822, proline 860–proline 863, and proline 878–proline 881. Positions proline 774–proline 881 are 5 X 4 AA repeats of P-X-X-P. A compositionally biased stretch (polar residues) spans serine 775–arginine 787. A disordered region spans residues glutamine 888 to glutamine 937. The segment covering aspartate 896–lysine 910 has biased composition (basic and acidic residues).

Forms homodimers in trans (molecules expressed by two different cells). Forms promiscuous heterodimers in cis (at the plasma membrane of the same cell) with other protocadherins.

It is found in the cell membrane. Its function is as follows. Calcium-dependent cell-adhesion protein involved in cells self-recognition and non-self discrimination. Thereby, it is involved in the establishment and maintenance of specific neuronal connections in the brain. In Pan troglodytes (Chimpanzee), this protein is Protocadherin alpha-7.